The following is a 506-amino-acid chain: Maturase K (506 aa).

It belongs to the intron maturase 2 family. MatK subfamily.

The protein localises to the plastid. It localises to the chloroplast. Usually encoded in the trnK tRNA gene intron. Probably assists in splicing its own and other chloroplast group II introns. The protein is Maturase K of Jasminum nudiflorum (Winter jasmine).